We begin with the raw amino-acid sequence, 218 residues long: Pyridoxine/pyridoxamine 5'-phosphate oxidase (218 aa).

Substrate is bound by residues 12–15 (RLSY) and Arg70. FMN-binding positions include 65–70 (RTVLLR), 80–81 (YT), Lys87, and Gln109. The substrate site is built by Tyr127, Arg131, and Ser135. Residues 145–146 (QS) and Trp191 contribute to the FMN site. 197–199 (RLH) is a binding site for substrate. Arg201 provides a ligand contact to FMN.

This sequence belongs to the pyridoxamine 5'-phosphate oxidase family. Homodimer. FMN serves as cofactor.

The catalysed reaction is pyridoxamine 5'-phosphate + O2 + H2O = pyridoxal 5'-phosphate + H2O2 + NH4(+). It carries out the reaction pyridoxine 5'-phosphate + O2 = pyridoxal 5'-phosphate + H2O2. It functions in the pathway cofactor metabolism; pyridoxal 5'-phosphate salvage; pyridoxal 5'-phosphate from pyridoxamine 5'-phosphate: step 1/1. The protein operates within cofactor metabolism; pyridoxal 5'-phosphate salvage; pyridoxal 5'-phosphate from pyridoxine 5'-phosphate: step 1/1. Functionally, catalyzes the oxidation of either pyridoxine 5'-phosphate (PNP) or pyridoxamine 5'-phosphate (PMP) into pyridoxal 5'-phosphate (PLP). This is Pyridoxine/pyridoxamine 5'-phosphate oxidase from Acinetobacter baumannii (strain SDF).